The sequence spans 776 residues: Ankyrin repeat and EF-hand domain-containing protein 1 (776 aa).

4 ANK repeats span residues 47–76, 184–213, 217–246, and 250–279; these read NGLS…HPDV, TGRT…EVNA, DRHH…DVGL, and NGNT…DLKW. The region spanning 335–369 is the EF-hand domain; sequence EREAFLREAFAVLDRGDGSISKNDFVMVLEERQDY. ANK repeat units lie at residues 524–553, 557–586, 590–619, and 623–652; these read YYKT…NVNA, FLWT…LIDA, NNST…KFQL, and KGHS…NLPK.

The protein is Ankyrin repeat and EF-hand domain-containing protein 1 (ANKEF1) of Homo sapiens (Human).